The sequence spans 469 residues: ATP-dependent protease ATPase subunit HslU (469 aa).

ATP is bound by residues I24, 66 to 71 (GVGKTE), D282, E347, and R419.

This sequence belongs to the ClpX chaperone family. HslU subfamily. In terms of assembly, a double ring-shaped homohexamer of HslV is capped on each side by a ring-shaped HslU homohexamer. The assembly of the HslU/HslV complex is dependent on binding of ATP.

It localises to the cytoplasm. In terms of biological role, ATPase subunit of a proteasome-like degradation complex; this subunit has chaperone activity. The binding of ATP and its subsequent hydrolysis by HslU are essential for unfolding of protein substrates subsequently hydrolyzed by HslV. HslU recognizes the N-terminal part of its protein substrates and unfolds these before they are guided to HslV for hydrolysis. This chain is ATP-dependent protease ATPase subunit HslU, found in Listeria monocytogenes serovar 1/2a (strain ATCC BAA-679 / EGD-e).